The primary structure comprises 1639 residues: Peroxide stress-activated histidine kinase mak1 (1639 aa).

The segment covering 38–49 (SFTNSQNSSVGS) has biased composition (polar residues). Residues 38 to 76 (SFTNSQNSSVGSVHSPILESPTSLNRQHRNSFSFNNVSS) form a disordered region. Low complexity predominate over residues 67–76 (NSFSFNNVSS). Residues 716–786 (PFPLLKVIID…NDWKSSLFSG (71 aa)) enclose the PAS 1 domain. The 53-residue stretch at 789 to 841 (FYHEIRLQRFDNVYRYFICRAVPLRDCTGSVLHFFGTMTDVHDQKLAERELQK) folds into the PAC 1 domain. The PAS 2 domain maps to 848-920 (NENSYRSLAE…ESLEGTFNNQ (73 aa)). One can recognise a PAC 2 domain in the interval 929-982 (FAAEIRFRSTDGHYRWHLVKSVCVNNSADTSTNLWLGTCTDIHDHKMLEEKLQE). The Histidine kinase domain maps to 1000-1223 (NMSHEIRTPL…RFMWTATFTM (224 aa)). H1003 bears the Phosphohistidine; by autocatalysis mark. In terms of domain architecture, Response regulatory spans 1507-1629 (SVLLAEDNII…HLSLIISGIL (123 aa)). D1559 bears the 4-aspartylphosphate mark.

It is found in the cytoplasm. The enzyme catalyses ATP + protein L-histidine = ADP + protein N-phospho-L-histidine.. Its function is as follows. Involved in the control of the SAPK-dependent transcriptional response to peroxide stress. Also has a role in G2/M regulation. The polypeptide is Peroxide stress-activated histidine kinase mak1 (mak1) (Schizosaccharomyces pombe (strain 972 / ATCC 24843) (Fission yeast)).